The following is a 416-amino-acid chain: CinA-like protein (416 aa).

This sequence belongs to the CinA family.

The protein is CinA-like protein of Synechocystis sp. (strain ATCC 27184 / PCC 6803 / Kazusa).